The following is a 572-amino-acid chain: Proline--tRNA ligase (572 aa).

The protein belongs to the class-II aminoacyl-tRNA synthetase family. ProS type 1 subfamily. As to quaternary structure, homodimer.

The protein resides in the cytoplasm. It carries out the reaction tRNA(Pro) + L-proline + ATP = L-prolyl-tRNA(Pro) + AMP + diphosphate. Catalyzes the attachment of proline to tRNA(Pro) in a two-step reaction: proline is first activated by ATP to form Pro-AMP and then transferred to the acceptor end of tRNA(Pro). As ProRS can inadvertently accommodate and process non-cognate amino acids such as alanine and cysteine, to avoid such errors it has two additional distinct editing activities against alanine. One activity is designated as 'pretransfer' editing and involves the tRNA(Pro)-independent hydrolysis of activated Ala-AMP. The other activity is designated 'posttransfer' editing and involves deacylation of mischarged Ala-tRNA(Pro). The misacylated Cys-tRNA(Pro) is not edited by ProRS. The sequence is that of Proline--tRNA ligase from Salmonella arizonae (strain ATCC BAA-731 / CDC346-86 / RSK2980).